A 311-amino-acid chain; its full sequence is MQPPGGDAPAGCPFSGARAAQPAQAAHEAPHVPGEADAQAGWHNAQLDFSKSMSYGDYLSLNSILDAQHPLSPDHNEMLFIIQHQTSELWMKLALFELRGALDAVRTDALPPAFKMLARVSRILEQLVQAWNVLSTMTPSEYSAMRPYLGQSSGFQSYQYRQLEFLLGNKNAQMLQPHAHRPDILEQVRATLEAPSFYDEVVRLLARRGFPIAPERLERDWTQPMRHDETVEAAWLEVYRHPQQHWELYEMAEELVDLEDAFRQWRFRHVTTVERIIGFKQGTGGTSGAPYLRKMLDVVLFPELWHVRTTL.

The interval 1-37 is disordered; the sequence is MQPPGGDAPAGCPFSGARAAQPAQAAHEAPHVPGEAD. The span at 17 to 27 shows a compositional bias: low complexity; it reads ARAAQPAQAAH. Substrate-binding positions include 80-84, Tyr-142, and Arg-146; that span reads FIIQH. His-269 lines the heme pocket. A substrate-binding site is contributed by Thr-283.

Belongs to the tryptophan 2,3-dioxygenase family. In terms of assembly, homotetramer. It depends on heme as a cofactor.

It carries out the reaction L-tryptophan + O2 = N-formyl-L-kynurenine. It functions in the pathway amino-acid degradation; L-tryptophan degradation via kynurenine pathway; L-kynurenine from L-tryptophan: step 1/2. Functionally, heme-dependent dioxygenase that catalyzes the oxidative cleavage of the L-tryptophan (L-Trp) pyrrole ring and converts L-tryptophan to N-formyl-L-kynurenine. Catalyzes the oxidative cleavage of the indole moiety. The protein is Tryptophan 2,3-dioxygenase of Burkholderia cenocepacia (strain ATCC BAA-245 / DSM 16553 / LMG 16656 / NCTC 13227 / J2315 / CF5610) (Burkholderia cepacia (strain J2315)).